A 130-amino-acid chain; its full sequence is Large ribosomal subunit protein bL19 (130 aa).

Belongs to the bacterial ribosomal protein bL19 family.

This protein is located at the 30S-50S ribosomal subunit interface and may play a role in the structure and function of the aminoacyl-tRNA binding site. The protein is Large ribosomal subunit protein bL19 of Parvibaculum lavamentivorans (strain DS-1 / DSM 13023 / NCIMB 13966).